Here is a 355-residue protein sequence, read N- to C-terminus: Mannonate dehydratase (355 aa).

Belongs to the mannonate dehydratase family. Fe(2+) serves as cofactor. Mn(2+) is required as a cofactor.

It carries out the reaction D-mannonate = 2-dehydro-3-deoxy-D-gluconate + H2O. The protein operates within carbohydrate metabolism; pentose and glucuronate interconversion. Its function is as follows. Catalyzes the dehydration of D-mannonate. In Brachyspira hyodysenteriae (strain ATCC 49526 / WA1), this protein is Mannonate dehydratase.